We begin with the raw amino-acid sequence, 613 residues long: 9-cis-epoxycarotenoid dioxygenase NCED5, chloroplastic (613 aa).

A compositionally biased stretch (polar residues) spans 1 to 15 (MPTTFTPNSPASSCS). The N-terminal 36 residues, 1–36 (MPTTFTPNSPASSCSIHHRASPSRGARNSVRFTRPR), are a transit peptide targeting the chloroplast. The tract at residues 1 to 62 (MPTTFTPNSP…PPAYVPPPPP (62 aa)) is disordered. Low complexity predominate over residues 37-50 (AAAAATNSVLSAPS). Over residues 51 to 62 (SVPPAYVPPPPP) the composition is skewed to pro residues. His305, His354, His419, and His600 together coordinate Fe cation.

This sequence belongs to the carotenoid oxygenase family. Requires Fe(2+) as cofactor.

The protein localises to the plastid. It is found in the chloroplast. It catalyses the reaction a 9-cis-epoxycarotenoid + O2 = a 12'-apo-carotenal + 2-cis,4-trans-xanthoxin. The catalysed reaction is 9-cis-violaxanthin + O2 = (3S,5R,6S)-5,6-epoxy-3-hydroxy-5,6-dihydro-12'-apo-beta-caroten-12'-al + 2-cis,4-trans-xanthoxin. It carries out the reaction 9'-cis-neoxanthin + O2 = (3S,5R,6R)-3,5-dihydroxy-6,7-didehydro-5,6-dihydro-12'-apo-beta-caroten-12'-al + 2-cis,4-trans-xanthoxin. Its function is as follows. Has a 11,12(11',12') 9-cis epoxycarotenoid cleavage activity. Catalyzes the first step of abscisic-acid biosynthesis from carotenoids. This Oryza sativa subsp. japonica (Rice) protein is 9-cis-epoxycarotenoid dioxygenase NCED5, chloroplastic.